A 279-amino-acid chain; its full sequence is Malonyl-[acyl-carrier protein] O-methyltransferase (279 aa).

It belongs to the methyltransferase superfamily.

It carries out the reaction malonyl-[ACP] + S-adenosyl-L-methionine = malonyl-[ACP] methyl ester + S-adenosyl-L-homocysteine. Its pathway is cofactor biosynthesis; biotin biosynthesis. Functionally, converts the free carboxyl group of a malonyl-thioester to its methyl ester by transfer of a methyl group from S-adenosyl-L-methionine (SAM). It allows to synthesize pimeloyl-ACP via the fatty acid synthetic pathway. The protein is Malonyl-[acyl-carrier protein] O-methyltransferase of Hahella chejuensis (strain KCTC 2396).